The chain runs to 320 residues: Ferrochelatase (320 aa).

Histidine 194 and glutamate 275 together coordinate Fe cation.

It belongs to the ferrochelatase family. Monomer.

The protein localises to the cytoplasm. It carries out the reaction heme b + 2 H(+) = protoporphyrin IX + Fe(2+). The protein operates within porphyrin-containing compound metabolism; protoheme biosynthesis; protoheme from protoporphyrin-IX: step 1/1. Functionally, catalyzes the ferrous insertion into protoporphyrin IX. The polypeptide is Ferrochelatase (Escherichia coli O8 (strain IAI1)).